The following is a 108-amino-acid chain: MATSKLQALWNHPAGPKTIHFWAPTFKWGISIANIADFQKPPETLSYPQQIVITGTGLVWSRYSTVITPKNWNLFSVSLGMAVTGIYQLTRKIKHDYVYEANSIVAKE.

The next 3 membrane-spanning stretches (helical) occupy residues 19–35 (IHFWAPTFKWGISIANI), 51–67 (IVITGTGLVWSRYSTVI), and 74–90 (LFSVSLGMAVTGIYQLT).

Belongs to the mitochondrial pyruvate carrier (MPC) (TC 2.A.105) family. In terms of tissue distribution, abundant in leaf and particularly in the guard cells.

It is found in the mitochondrion. The protein resides in the mitochondrion inner membrane. Functionally, mediates the uptake of pyruvate into mitochondria. Negatively regulates ABA-induced guard cell signaling and mediates drought stress responses. The polypeptide is Mitochondrial pyruvate carrier 3 (Arabidopsis thaliana (Mouse-ear cress)).